Here is a 431-residue protein sequence, read N- to C-terminus: tRNA(Ile)-lysidine synthase (431 aa).

An ATP-binding site is contributed by 19–24; it reads STGIDS.

Belongs to the tRNA(Ile)-lysidine synthase family.

The protein localises to the cytoplasm. It catalyses the reaction cytidine(34) in tRNA(Ile2) + L-lysine + ATP = lysidine(34) in tRNA(Ile2) + AMP + diphosphate + H(+). Ligates lysine onto the cytidine present at position 34 of the AUA codon-specific tRNA(Ile) that contains the anticodon CAU, in an ATP-dependent manner. Cytidine is converted to lysidine, thus changing the amino acid specificity of the tRNA from methionine to isoleucine. The polypeptide is tRNA(Ile)-lysidine synthase (Staphylococcus aureus (strain COL)).